Reading from the N-terminus, the 142-residue chain is Hemoglobin subunit alpha-1 (142 aa).

Residue S1 is modified to N-acetylserine. A Globin domain is found at 1-142 (SLSDKDKAAV…VALALAERYR (142 aa)). Position 59 (H59) interacts with O2. H88 provides a ligand contact to heme b.

Belongs to the globin family. Hb1 is a heterotetramer of two alpha-2 chains and two beta chains, while Hb2 is a heterotetramer of two alpha-2 chains and two beta chains. Red blood cells.

Involved in oxygen transport from gills to the various peripheral tissues. This chain is Hemoglobin subunit alpha-1 (hba1), found in Notothenia angustata (Rockcod).